The primary structure comprises 326 residues: Putative ribose-phosphate pyrophosphokinase 2 (326 aa).

ATP-binding positions include 43-45 (DGE) and 102-103 (RQ). His-136 contacts Mg(2+). D-ribose 5-phosphate contacts are provided by residues Asp-225 and 229–233 (NTGKT).

This sequence belongs to the ribose-phosphate pyrophosphokinase family. Class I subfamily. In terms of assembly, homohexamer. Mg(2+) serves as cofactor.

The protein resides in the cytoplasm. The catalysed reaction is D-ribose 5-phosphate + ATP = 5-phospho-alpha-D-ribose 1-diphosphate + AMP + H(+). It participates in metabolic intermediate biosynthesis; 5-phospho-alpha-D-ribose 1-diphosphate biosynthesis; 5-phospho-alpha-D-ribose 1-diphosphate from D-ribose 5-phosphate (route I): step 1/1. Its function is as follows. Involved in the biosynthesis of the central metabolite phospho-alpha-D-ribosyl-1-pyrophosphate (PRPP) via the transfer of pyrophosphoryl group from ATP to 1-hydroxyl of ribose-5-phosphate (Rib-5-P). The chain is Putative ribose-phosphate pyrophosphokinase 2 from Streptococcus pyogenes serotype M18 (strain MGAS8232).